Here is a 475-residue protein sequence, read N- to C-terminus: MNTALAQQIANEGGVEAWMIAQQHKSLLRFLTCGSVDDGKSTLIGRLLHDTRQIYEDQLSSLHNDSKRHGTQGEKLDLALLVDGLQAEREQGITIDVAYRYFSTEKRKFIIADTPGHEQYTRNMATGASTCELAILLIDARKGVLDQTRRHSFISTLLGIKHLVVAINKMDLVDYSEETFTRIREDYLTFAGQLPGNLDIRFVPLSALEGDNVASQSESMPWYSGPTLLEVLETVEIQRVVDAQPMRFPVQYVNRPNLDFRGYAGTLASGRVEVGQRVKVLPSGVESNVARIVTFDGDREEAFAGEAITLVLTDEIDISRGDLLLAADEALPAVQSASVDVVWMAEQPLSPGQSYDIKIAGKKTRSRVDGIRYQVDINNLTQREVENLPLNGIGLVDLTFDEPLVLDRYQQNPVTGGLIFIDRLSNVTVGAGMVHEPVSQATAAPSEFSAFELELNALVRRHFPHWGARDLLGEK.

The 215-residue stretch at 25–239 (KSLLRFLTCG…EVLETVEIQR (215 aa)) folds into the tr-type G domain. Positions 34–41 (GSVDDGKS) are G1. GTP is bound at residue 34–41 (GSVDDGKS). Residues 92 to 96 (GITID) form a G2 region. Residues 113 to 116 (DTPG) form a G3 region. Residues 113–117 (DTPGH) and 168–171 (NKMD) each bind GTP. The tract at residues 168-171 (NKMD) is G4. A G5 region spans residues 206 to 208 (SAL).

This sequence belongs to the TRAFAC class translation factor GTPase superfamily. Classic translation factor GTPase family. CysN/NodQ subfamily. Heterodimer composed of CysD, the smaller subunit, and CysN.

It carries out the reaction sulfate + ATP + H(+) = adenosine 5'-phosphosulfate + diphosphate. The protein operates within sulfur metabolism; hydrogen sulfide biosynthesis; sulfite from sulfate: step 1/3. In terms of biological role, with CysD forms the ATP sulfurylase (ATPS) that catalyzes the adenylation of sulfate producing adenosine 5'-phosphosulfate (APS) and diphosphate, the first enzymatic step in sulfur assimilation pathway. APS synthesis involves the formation of a high-energy phosphoric-sulfuric acid anhydride bond driven by GTP hydrolysis by CysN coupled to ATP hydrolysis by CysD. The protein is Sulfate adenylyltransferase subunit 1 of Escherichia coli O157:H7.